A 492-amino-acid polypeptide reads, in one-letter code: Uridine-cytidine kinase D (492 aa).

Residues 36 to 56 are disordered; it reads PLPKNKKDHDQSIESDSSFTR. Residue 117-124 coordinates ATP; sequence GPVGAGKT. The CYTH domain maps to 290-460; it reads EPVYVCKAKY…PQTFLYLYFK (171 aa). Residues 468 to 483 are compositionally biased toward low complexity; the sequence is PNYSKLKPNNTNSKIL. A disordered region spans residues 468-492; sequence PNYSKLKPNNTNSKILKNNKDKKNL.

It belongs to the uridine kinase family.

It carries out the reaction uridine + ATP = UMP + ADP + H(+). It catalyses the reaction cytidine + ATP = CMP + ADP + H(+). It functions in the pathway pyrimidine metabolism; CTP biosynthesis via salvage pathway; CTP from cytidine: step 1/3. The protein operates within pyrimidine metabolism; UMP biosynthesis via salvage pathway; UMP from uridine: step 1/1. Its function is as follows. Catalyzes the conversion of uridine into uridine monophosphate and cytidine into cytidine monophosphate in the pyrimidine salvage pathway. The protein is Uridine-cytidine kinase D (udkD) of Dictyostelium discoideum (Social amoeba).